A 188-amino-acid polypeptide reads, in one-letter code: UPF0461 protein C5orf24 homolog (188 aa).

Residue Ser-37 is modified to Phosphoserine. Residue Lys-75 forms a Glycyl lysine isopeptide (Lys-Gly) (interchain with G-Cter in SUMO2) linkage. Over residues 80 to 92 (KKKNLNRSGKRGR) the composition is skewed to basic residues. The segment at 80-141 (KKKNLNRSGK…AGYKVSPGRP (62 aa)) is disordered. Residues 94-107 (SGTTKSAGYRTSTG) show a composition bias toward polar residues. A phosphoserine mark is found at Ser-121 and Ser-180. Lys-184 is covalently cross-linked (Glycyl lysine isopeptide (Lys-Gly) (interchain with G-Cter in SUMO2)).

Belongs to the UPF0461 family.

The sequence is that of UPF0461 protein C5orf24 homolog from Mus musculus (Mouse).